The following is a 226-amino-acid chain: Fibronectin type III domain-containing protein 10 (226 aa).

An N-terminal signal peptide occupies residues methionine 1 to alanine 20. Residues alanine 21 to aspartate 182 are Extracellular-facing. In terms of domain architecture, Fibronectin type-III spans proline 74–glutamate 166. N-linked (GlcNAc...) asparagine glycans are attached at residues asparagine 86 and asparagine 109. Residues isoleucine 183–leucine 203 form a helical membrane-spanning segment. Topologically, residues leucine 204 to proline 226 are cytoplasmic.

Its subcellular location is the membrane. The polypeptide is Fibronectin type III domain-containing protein 10 (FNDC10) (Homo sapiens (Human)).